The primary structure comprises 337 residues: Anthranilate phosphoribosyltransferase (337 aa).

5-phospho-alpha-D-ribose 1-diphosphate contacts are provided by residues Gly81, 84 to 85, Ser89, 91 to 94, 109 to 117, and Ala121; these read GD, NVST, and KHGNRAMSS. Anthranilate is bound at residue Gly81. Residue Ser93 participates in Mg(2+) binding. An anthranilate-binding site is contributed by Asn112. Residue Arg167 coordinates anthranilate. Mg(2+)-binding residues include Asp226 and Glu227.

The protein belongs to the anthranilate phosphoribosyltransferase family. As to quaternary structure, homodimer. Mg(2+) is required as a cofactor.

The enzyme catalyses N-(5-phospho-beta-D-ribosyl)anthranilate + diphosphate = 5-phospho-alpha-D-ribose 1-diphosphate + anthranilate. The protein operates within amino-acid biosynthesis; L-tryptophan biosynthesis; L-tryptophan from chorismate: step 2/5. Functionally, catalyzes the transfer of the phosphoribosyl group of 5-phosphorylribose-1-pyrophosphate (PRPP) to anthranilate to yield N-(5'-phosphoribosyl)-anthranilate (PRA). This Afipia carboxidovorans (strain ATCC 49405 / DSM 1227 / KCTC 32145 / OM5) (Oligotropha carboxidovorans) protein is Anthranilate phosphoribosyltransferase.